A 112-amino-acid chain; its full sequence is cAMP-regulated phosphoprotein 19 (112 aa).

Over residues 1–11 (MSAESPEPASA) the composition is skewed to low complexity. The interval 1-49 (MSAESPEPASAEEQKEMEDKVLSPEKAEEAKLKARYPHLGQKPGGSDFL) is disordered. Positions 12–32 (EEQKEMEDKVLSPEKAEEAKL) are enriched in basic and acidic residues. Residues serine 62 and serine 104 each carry the phosphoserine; by GWL modification. Positions 72-112 (MKNKQLPTAAPDKTEVTGDHIPTPQDLPQRKPSLVASKLAG) are disordered. At serine 104 the chain carries Phosphoserine; by PKA.

This sequence belongs to the endosulfine family. As to quaternary structure, interacts (when phosphorylated at Ser-62) with PPP2R2D. Post-translationally, phosphorylation at Ser-62 by MASTL/GWL during mitosis is essential for interaction with PPP2R2D (PR55-delta) and subsequent inactivation of PP2A.

The protein localises to the cytoplasm. Protein phosphatase inhibitor that specifically inhibits protein phosphatase 2A (PP2A) during mitosis. Inhibition of PP2A is enhanced when ARPP19 is phosphorylated. When phosphorylated at Ser-62 during mitosis, specifically interacts with PPP2R2D (PR55-delta) and inhibits its activity, leading to inactivation of PP2A, an essential condition to keep cyclin-B1-CDK1 activity high during M phase. The sequence is that of cAMP-regulated phosphoprotein 19 (ARPP19) from Taeniopygia guttata (Zebra finch).